The primary structure comprises 345 residues: Dihydroorotase (345 aa).

Positions 13 and 15 each coordinate Zn(2+). Residues 15-17 (HLR) and N41 contribute to the substrate site. Zn(2+) is bound by residues K99, H136, and H174. K99 carries the N6-carboxylysine modification. H136 is a binding site for substrate. L219 contacts substrate. Residue D247 participates in Zn(2+) binding. D247 is a catalytic residue. H251 and A263 together coordinate substrate.

Belongs to the metallo-dependent hydrolases superfamily. DHOase family. Class II DHOase subfamily. As to quaternary structure, homodimer. Zn(2+) serves as cofactor.

The enzyme catalyses (S)-dihydroorotate + H2O = N-carbamoyl-L-aspartate + H(+). Its pathway is pyrimidine metabolism; UMP biosynthesis via de novo pathway; (S)-dihydroorotate from bicarbonate: step 3/3. In terms of biological role, catalyzes the reversible cyclization of carbamoyl aspartate to dihydroorotate. This Acaryochloris marina (strain MBIC 11017) protein is Dihydroorotase.